The following is a 347-amino-acid chain: Eukaryotic translation initiation factor 3 subunit I (347 aa).

5 WD repeats span residues 8-49 (GHER…GTLD), 51-89 (HMGS…CVQT), 149-190 (THEG…KLVE), 194-233 (VHKD…VLKT), and 291-330 (GHFG…FDFK).

Belongs to the eIF-3 subunit I family. In terms of assembly, component of the eukaryotic translation initiation factor 3 (eIF-3) complex.

Its subcellular location is the cytoplasm. Functionally, component of the eukaryotic translation initiation factor 3 (eIF-3) complex, which is involved in protein synthesis of a specialized repertoire of mRNAs and, together with other initiation factors, stimulates binding of mRNA and methionyl-tRNAi to the 40S ribosome. The eIF-3 complex specifically targets and initiates translation of a subset of mRNAs involved in cell proliferation. The chain is Eukaryotic translation initiation factor 3 subunit I from Candida glabrata (strain ATCC 2001 / BCRC 20586 / JCM 3761 / NBRC 0622 / NRRL Y-65 / CBS 138) (Yeast).